We begin with the raw amino-acid sequence, 91 residues long: MTEKFNLQDRFLNMLRTGKIEVKVYLVNGFQTKGIIRSFDSYTILLESENQQNLIYKHAISTIMPSSFVRLVKKEEEEQEGQTESATNKTQ.

The region spanning 9–69 (DRFLNMLRTG…ISTIMPSSFV (61 aa)) is the Sm domain.

The protein belongs to the Hfq family. As to quaternary structure, homohexamer.

RNA chaperone that binds small regulatory RNA (sRNAs) and mRNAs to facilitate mRNA translational regulation in response to envelope stress, environmental stress and changes in metabolite concentrations. Also binds with high specificity to tRNAs. This is RNA-binding protein Hfq from Pseudothermotoga lettingae (strain ATCC BAA-301 / DSM 14385 / NBRC 107922 / TMO) (Thermotoga lettingae).